The following is a 1434-amino-acid chain: DNA-directed RNA polymerase subunit beta (1434 aa).

This sequence belongs to the RNA polymerase beta chain family. The RNAP catalytic core consists of 2 alpha, 1 beta, 1 beta' and 1 omega subunit. When a sigma factor is associated with the core the holoenzyme is formed, which can initiate transcription.

The enzyme catalyses RNA(n) + a ribonucleoside 5'-triphosphate = RNA(n+1) + diphosphate. Functionally, DNA-dependent RNA polymerase catalyzes the transcription of DNA into RNA using the four ribonucleoside triphosphates as substrates. The sequence is that of DNA-directed RNA polymerase subunit beta from Ureaplasma parvum serovar 3 (strain ATCC 700970).